The primary structure comprises 456 residues: Protein king tubby (456 aa).

The tract at residues 111–202 (HELEDEESSP…SNGAGGESEG (92 aa)) is disordered. Residues 120–152 (PVTVIEQQQTAPHSANSTHSQRPSTTRQPSFND) are compositionally biased toward polar residues. Serine 149 carries the phosphoserine modification.

Belongs to the TUB family.

It is found in the cytoplasm. Its subcellular location is the nucleus. The protein localises to the cell projection. The protein resides in the cilium membrane. It localises to the rhabdomere. In Drosophila pseudoobscura pseudoobscura (Fruit fly), this protein is Protein king tubby.